Here is a 441-residue protein sequence, read N- to C-terminus: Apolipoprotein N-acyltransferase (441 aa).

The next 7 membrane-spanning stretches (helical) occupy residues 23–43 (IIFK…SIYL), 45–65 (FFEN…GLVL), 75–95 (YFWI…LSSI), 97–117 (FNLN…YGLL), 133–153 (GIFC…WGIF), 156–176 (YGFF…AYFI), and 178–198 (EGYI…FSGF). The CN hydrolase domain maps to 215-441 (INTNISQDQK…LSKEIFNDKK (227 aa)). Residue E256 is the Proton acceptor of the active site. K310 is a catalytic residue. The Nucleophile role is filled by C359.

The protein belongs to the CN hydrolase family. Apolipoprotein N-acyltransferase subfamily.

It localises to the cell inner membrane. It catalyses the reaction N-terminal S-1,2-diacyl-sn-glyceryl-L-cysteinyl-[lipoprotein] + a glycerophospholipid = N-acyl-S-1,2-diacyl-sn-glyceryl-L-cysteinyl-[lipoprotein] + a 2-acyl-sn-glycero-3-phospholipid + H(+). It functions in the pathway protein modification; lipoprotein biosynthesis (N-acyl transfer). Functionally, catalyzes the phospholipid dependent N-acylation of the N-terminal cysteine of apolipoprotein, the last step in lipoprotein maturation. The polypeptide is Apolipoprotein N-acyltransferase (Campylobacter jejuni subsp. jejuni serotype O:2 (strain ATCC 700819 / NCTC 11168)).